The sequence spans 506 residues: Probable alpha-L-arabinofuranosidase B (506 aa).

Residues 1 to 26 form the signal peptide; that stretch reads MLLPRGFNRAVVTALGVVGTGTLVAA. The tract at residues 27 to 343 is catalytic; the sequence is GPCDIYSSGG…ANIVAAKYAV (317 aa). 3 disulfides stabilise this stretch: C29/C39, C89/C94, and C184/C185. D227 contacts substrate. Residue E229 is the Nucleophile of the active site. N230 contacts substrate. N-linked (GlcNAc...) asparagine glycosylation is present at N285. Substrate is bound at residue G304. Residue D305 is the Proton donor of the active site. The interval 344–506 is ABD; it reads APLTSGPSLT…VSWVVSTSFA (163 aa). N375 carries an N-linked (GlcNAc...) asparagine glycan. The cysteines at positions 409 and 447 are disulfide-linked. Substrate-binding residues include H424, F427, D443, H471, L476, and D496.

The protein belongs to the glycosyl hydrolase 54 family.

It localises to the secreted. It catalyses the reaction Hydrolysis of terminal non-reducing alpha-L-arabinofuranoside residues in alpha-L-arabinosides.. The protein operates within glycan metabolism; L-arabinan degradation. Functionally, alpha-L-arabinofuranosidase involved in the degradation of arabinoxylan, a major component of plant hemicellulose. Able to hydrolyze 1,5-, 1,3- and 1,2-alpha-linkages not only in L-arabinofuranosyl oligosaccharides, but also in polysaccharides containing terminal non-reducing L-arabinofuranoses in side chains, like L-arabinan, arabinogalactan and arabinoxylan. The polypeptide is Probable alpha-L-arabinofuranosidase B (abfB) (Aspergillus terreus (strain NIH 2624 / FGSC A1156)).